Consider the following 662-residue polypeptide: UvrABC system protein B (662 aa).

The Helicase ATP-binding domain maps to threonine 25 to proline 414. Glycine 38–threonine 45 contacts ATP. The Beta-hairpin signature appears at tyrosine 91–isoleucine 114. Residues glutamine 430–isoleucine 592 enclose the Helicase C-terminal domain. Residues lysine 622 to alanine 657 enclose the UVR domain.

This sequence belongs to the UvrB family. In terms of assembly, forms a heterotetramer with UvrA during the search for lesions. Interacts with UvrC in an incision complex.

It localises to the cytoplasm. Functionally, the UvrABC repair system catalyzes the recognition and processing of DNA lesions. A damage recognition complex composed of 2 UvrA and 2 UvrB subunits scans DNA for abnormalities. Upon binding of the UvrA(2)B(2) complex to a putative damaged site, the DNA wraps around one UvrB monomer. DNA wrap is dependent on ATP binding by UvrB and probably causes local melting of the DNA helix, facilitating insertion of UvrB beta-hairpin between the DNA strands. Then UvrB probes one DNA strand for the presence of a lesion. If a lesion is found the UvrA subunits dissociate and the UvrB-DNA preincision complex is formed. This complex is subsequently bound by UvrC and the second UvrB is released. If no lesion is found, the DNA wraps around the other UvrB subunit that will check the other stand for damage. The polypeptide is UvrABC system protein B (Rickettsia prowazekii (strain Madrid E)).